A 160-amino-acid chain; its full sequence is Large ribosomal subunit protein uL22c (160 aa).

The protein belongs to the universal ribosomal protein uL22 family. Part of the 50S ribosomal subunit.

It localises to the plastid. It is found in the chloroplast. In terms of biological role, this protein binds specifically to 23S rRNA. Functionally, the globular domain of the protein is located near the polypeptide exit tunnel on the outside of the subunit, while an extended beta-hairpin is found that lines the wall of the exit tunnel in the center of the 70S ribosome. This Nasturtium officinale (Watercress) protein is Large ribosomal subunit protein uL22c (rpl22).